Here is a 1332-residue protein sequence, read N- to C-terminus: DNA-directed RNA polymerase subunit beta'' (1332 aa).

Positions 220, 291, 298, and 301 each coordinate Zn(2+).

It belongs to the RNA polymerase beta' chain family. RpoC2 subfamily. In terms of assembly, in plastids the minimal PEP RNA polymerase catalytic core is composed of four subunits: alpha, beta, beta', and beta''. When a (nuclear-encoded) sigma factor is associated with the core the holoenzyme is formed, which can initiate transcription. Zn(2+) is required as a cofactor.

It localises to the plastid. The protein resides in the chloroplast. The catalysed reaction is RNA(n) + a ribonucleoside 5'-triphosphate = RNA(n+1) + diphosphate. DNA-dependent RNA polymerase catalyzes the transcription of DNA into RNA using the four ribonucleoside triphosphates as substrates. The polypeptide is DNA-directed RNA polymerase subunit beta'' (Lotus japonicus (Lotus corniculatus var. japonicus)).